We begin with the raw amino-acid sequence, 185 residues long: Elongation factor P (185 aa).

The protein belongs to the elongation factor P family.

Its subcellular location is the cytoplasm. It functions in the pathway protein biosynthesis; polypeptide chain elongation. Functionally, involved in peptide bond synthesis. Stimulates efficient translation and peptide-bond synthesis on native or reconstituted 70S ribosomes in vitro. Probably functions indirectly by altering the affinity of the ribosome for aminoacyl-tRNA, thus increasing their reactivity as acceptors for peptidyl transferase. The polypeptide is Elongation factor P (Picosynechococcus sp. (strain ATCC 27264 / PCC 7002 / PR-6) (Agmenellum quadruplicatum)).